A 91-amino-acid polypeptide reads, in one-letter code: Ice-structuring protein (91 aa).

The signal sequence occupies residues 1–21; it reads MALSLFTVGQLIFLFWTMRIT. The propeptide at 22–39 is removed by a dipeptidylpeptidase; it reads EANPDPAAKAVPAAAAPD.

This sequence belongs to the type-I AFP family.

It is found in the secreted. Its function is as follows. Contributes to protect fish blood from freezing at subzero sea water temperatures. Lowers the blood freezing point. Binds to nascent ice crystals and prevents further growth. The chain is Ice-structuring protein from Pseudopleuronectes americanus (Winter flounder).